The primary structure comprises 170 residues: UPF0260 protein RPC_1790 (170 aa).

The protein belongs to the UPF0260 family.

The sequence is that of UPF0260 protein RPC_1790 from Rhodopseudomonas palustris (strain BisB18).